The following is a 252-amino-acid chain: Trans-aconitate 2-methyltransferase (252 aa).

It belongs to the methyltransferase superfamily. Tam family.

It localises to the cytoplasm. The catalysed reaction is trans-aconitate + S-adenosyl-L-methionine = (E)-3-(methoxycarbonyl)pent-2-enedioate + S-adenosyl-L-homocysteine. In terms of biological role, catalyzes the S-adenosylmethionine monomethyl esterification of trans-aconitate. In Escherichia coli O17:K52:H18 (strain UMN026 / ExPEC), this protein is Trans-aconitate 2-methyltransferase.